The following is a 784-amino-acid chain: Cyclin-dependent kinase 11B (784 aa).

Over residues 18–60 the composition is skewed to basic and acidic residues; sequence QEKKRRKEQEEKAEIKRLKNSDDRDSKRDSLEEGELRDHRMEI. The tract at residues 18–401 is disordered; that stretch reads QEKKRRKEQE…EGDYVPDSPA (384 aa). Phosphoserine is present on residues Ser-47 and Ser-72. The segment covering 95–113 has biased composition (basic residues); the sequence is EKAHHRKDEKRKEKRRHRS. Basic and acidic residues-rich tracts occupy residues 114–131, 138–227, and 238–263; these read HSAE…EREH, REEQ…DKGK, and PPRE…RDLL. Phosphoserine is present on Ser-115. Position 270 is a phosphoserine (Ser-270). Residues 278–289 are compositionally biased toward low complexity; it reads SAESSSAESGSG. Composition is skewed to acidic residues over residues 290–353 and 372–381; these read SEEE…EDRE and DSEEGEEEVG. The 286-residue stretch at 427-712 folds into the Protein kinase domain; it reads FQCLNRIEEG…AEDGLKHEYF (286 aa). Residues 433 to 441 and Lys-456 contribute to the ATP site; that span reads IEEGTYGVV. A Phosphoserine; by CDK7 modification is found at Ser-471. A Phosphothreonine; by CDK7 modification is found at Thr-477. The Proton acceptor role is filled by Asp-551. Phosphoserine is present on Ser-578. Tyr-583 is modified (phosphotyrosine). A Phosphothreonine modification is found at Thr-584. Residue Lys-630 forms a Glycyl lysine isopeptide (Lys-Gly) (interchain with G-Cter in SUMO2) linkage. The tract at residues 722–784 is disordered; sequence SMFPTWPAKS…AAGPGFSLKF (63 aa). Residue Thr-740 is modified to Phosphothreonine. Ser-741 carries the phosphoserine modification.

This sequence belongs to the protein kinase superfamily. CMGC Ser/Thr protein kinase family. CDC2/CDKX subfamily. In terms of assembly, may interact PAK1 and RANBP9. p110C interacts with RNPS1. Interacts with CCND3. Interacts with CCNL1 and CCNL2. Forms complexes with pre-mRNA-splicing factors, including at least SRSF1, SRSF2 AND SRSF7/SLU7. Mg(2+) is required as a cofactor. Phosphorylation at Ser-115 creates a binding site for 14-3-3 proteins.

It catalyses the reaction L-seryl-[protein] + ATP = O-phospho-L-seryl-[protein] + ADP + H(+). The catalysed reaction is L-threonyl-[protein] + ATP = O-phospho-L-threonyl-[protein] + ADP + H(+). Phosphorylation at Thr-437 or Tyr-438 inactivates the enzyme, while phosphorylation at Thr-584 activates it. Its function is as follows. Plays multiple roles in cell cycle progression, cytokinesis and apoptosis. Involved in pre-mRNA splicing in a kinase activity-dependent manner. May act as a negative regulator of normal cell cycle progression. This Mus musculus (Mouse) protein is Cyclin-dependent kinase 11B (Cdk11b).